Consider the following 267-residue polypeptide: 4-hydroxy-tetrahydrodipicolinate reductase (267 aa).

8–13 (GANGRM) contributes to the NAD(+) binding site. Arginine 35 is an NADP(+) binding site. Residues 98-100 (GTT) and 122-125 (AANY) contribute to the NAD(+) site. Residue histidine 155 is the Proton donor/acceptor of the active site. A (S)-2,3,4,5-tetrahydrodipicolinate-binding site is contributed by histidine 156. Lysine 159 serves as the catalytic Proton donor. 165–166 (GT) contributes to the (S)-2,3,4,5-tetrahydrodipicolinate binding site.

It belongs to the DapB family.

The protein localises to the cytoplasm. It carries out the reaction (S)-2,3,4,5-tetrahydrodipicolinate + NAD(+) + H2O = (2S,4S)-4-hydroxy-2,3,4,5-tetrahydrodipicolinate + NADH + H(+). The enzyme catalyses (S)-2,3,4,5-tetrahydrodipicolinate + NADP(+) + H2O = (2S,4S)-4-hydroxy-2,3,4,5-tetrahydrodipicolinate + NADPH + H(+). It participates in amino-acid biosynthesis; L-lysine biosynthesis via DAP pathway; (S)-tetrahydrodipicolinate from L-aspartate: step 4/4. Functionally, catalyzes the conversion of 4-hydroxy-tetrahydrodipicolinate (HTPA) to tetrahydrodipicolinate. This is 4-hydroxy-tetrahydrodipicolinate reductase from Pseudoalteromonas atlantica (strain T6c / ATCC BAA-1087).